Consider the following 543-residue polypeptide: Sodium/glucose cotransporter (543 aa).

14 helical membrane-spanning segments follow: residues 10–30 (FIDI…GLWV), 45–65 (FLAG…AANI), 79–99 (SIGL…IIVG), 129–149 (ILAV…VLYL), 156–176 (TILG…ALVY), 193–213 (VFFL…FIGG), 246–266 (LPGI…YWGF), 287–307 (IVFA…PGIA), 345–365 (FLPV…IVSS), 401–421 (TAAV…GGIG), 427–447 (IQEY…LGLF), 455–475 (GAII…FMPL), 483–503 (MLYT…STSI), and 523–543 (SFNI…TLFW).

Its subcellular location is the cell membrane. Actively transports glucose into cells by Na(+) cotransport. The sequence is that of Sodium/glucose cotransporter (sglT) from Vibrio parahaemolyticus.